The chain runs to 403 residues: Phosphopentomutase (403 aa).

The Mn(2+) site is built by Asp13, Asp298, His303, Asp339, His340, and His351.

Belongs to the phosphopentomutase family. Mn(2+) is required as a cofactor.

The protein resides in the cytoplasm. The enzyme catalyses 2-deoxy-alpha-D-ribose 1-phosphate = 2-deoxy-D-ribose 5-phosphate. The catalysed reaction is alpha-D-ribose 1-phosphate = D-ribose 5-phosphate. It participates in carbohydrate degradation; 2-deoxy-D-ribose 1-phosphate degradation; D-glyceraldehyde 3-phosphate and acetaldehyde from 2-deoxy-alpha-D-ribose 1-phosphate: step 1/2. Its function is as follows. Isomerase that catalyzes the conversion of deoxy-ribose 1-phosphate (dRib-1-P) and ribose 1-phosphate (Rib-1-P) to deoxy-ribose 5-phosphate (dRib-5-P) and ribose 5-phosphate (Rib-5-P), respectively. In Streptococcus pyogenes serotype M3 (strain ATCC BAA-595 / MGAS315), this protein is Phosphopentomutase.